Consider the following 159-residue polypeptide: Ribosomal RNA large subunit methyltransferase H (159 aa).

S-adenosyl-L-methionine is bound by residues L76, G108, and 127 to 132; that span reads FSKMTF.

This sequence belongs to the RNA methyltransferase RlmH family. In terms of assembly, homodimer.

Its subcellular location is the cytoplasm. The enzyme catalyses pseudouridine(1915) in 23S rRNA + S-adenosyl-L-methionine = N(3)-methylpseudouridine(1915) in 23S rRNA + S-adenosyl-L-homocysteine + H(+). Specifically methylates the pseudouridine at position 1915 (m3Psi1915) in 23S rRNA. In Exiguobacterium sibiricum (strain DSM 17290 / CCUG 55495 / CIP 109462 / JCM 13490 / 255-15), this protein is Ribosomal RNA large subunit methyltransferase H.